The following is a 79-amino-acid chain: Small ribosomal subunit protein eS17 (79 aa).

The protein belongs to the eukaryotic ribosomal protein eS17 family.

This is Small ribosomal subunit protein eS17 from Saccharolobus solfataricus (strain ATCC 35092 / DSM 1617 / JCM 11322 / P2) (Sulfolobus solfataricus).